The primary structure comprises 91 residues: Large ribosomal subunit protein bL31B (91 aa).

It belongs to the bacterial ribosomal protein bL31 family. Type B subfamily. In terms of assembly, part of the 50S ribosomal subunit.

The sequence is that of Large ribosomal subunit protein bL31B from Neisseria meningitidis serogroup B (strain ATCC BAA-335 / MC58).